Consider the following 83-residue polypeptide: Small ribosomal subunit protein bS20 (83 aa).

It belongs to the bacterial ribosomal protein bS20 family.

Binds directly to 16S ribosomal RNA. In Leuconostoc mesenteroides subsp. mesenteroides (strain ATCC 8293 / DSM 20343 / BCRC 11652 / CCM 1803 / JCM 6124 / NCDO 523 / NBRC 100496 / NCIMB 8023 / NCTC 12954 / NRRL B-1118 / 37Y), this protein is Small ribosomal subunit protein bS20.